A 298-amino-acid polypeptide reads, in one-letter code: 4-nitrophenylphosphatase (298 aa).

Homodimer. Post-translationally, the N-terminus is blocked.

The catalysed reaction is 4-nitrophenyl phosphate + H2O = 4-nitrophenol + phosphate + H(+). Its activity is regulated as follows. Activity enhanced by Mg(2+) ion but inhibited by Zn(2+) ion. This chain is 4-nitrophenylphosphatase (pho2), found in Schizosaccharomyces pombe (strain 972 / ATCC 24843) (Fission yeast).